The sequence spans 352 residues: Pyrimidine monooxygenase RutA (352 aa).

FMN is bound by residues I49–K50, N115, E124, R140–Y141, and S189.

It belongs to the NtaA/SnaA/DszA monooxygenase family. RutA subfamily.

It catalyses the reaction uracil + FMNH2 + NADH + O2 = (Z)-3-ureidoacrylate + FMN + NAD(+) + H2O + H(+). It carries out the reaction thymine + FMNH2 + NADH + O2 = (Z)-2-methylureidoacrylate + FMN + NAD(+) + H2O + H(+). Functionally, catalyzes the pyrimidine ring opening between N-3 and C-4 by an unusual flavin hydroperoxide-catalyzed mechanism, adding oxygen atoms in the process to yield ureidoacrylate peracid, that immediately reacts with FMN forming ureidoacrylate and FMN-N(5)-oxide. The FMN-N(5)-oxide reacts spontaneously with NADH to produce FMN. Requires the flavin reductase RutF to regenerate FMN in vivo. The sequence is that of Pyrimidine monooxygenase RutA from Caulobacter segnis (strain ATCC 21756 / DSM 7131 / JCM 7823 / NBRC 15250 / LMG 17158 / TK0059) (Mycoplana segnis).